The primary structure comprises 231 residues: 2,3-bisphosphoglycerate-dependent phosphoglycerate mutase (231 aa).

Substrate is bound by residues 8 to 15, 21 to 22, R60, 87 to 90, K98, 114 to 115, and 183 to 184; these read RHGESEWN, TG, ERHY, RR, and GN. Catalysis depends on H9, which acts as the Tele-phosphohistidine intermediate. E87 functions as the Proton donor/acceptor in the catalytic mechanism.

Belongs to the phosphoglycerate mutase family. BPG-dependent PGAM subfamily.

The catalysed reaction is (2R)-2-phosphoglycerate = (2R)-3-phosphoglycerate. It participates in carbohydrate degradation; glycolysis; pyruvate from D-glyceraldehyde 3-phosphate: step 3/5. In terms of biological role, catalyzes the interconversion of 2-phosphoglycerate and 3-phosphoglycerate. This Streptococcus pyogenes serotype M49 (strain NZ131) protein is 2,3-bisphosphoglycerate-dependent phosphoglycerate mutase.